A 324-amino-acid polypeptide reads, in one-letter code: Olfactory receptor 11H4 (324 aa).

The Extracellular portion of the chain corresponds to 1–35 (MSFFFVDLRPMNRSATHIVTEFILLGFPGCWKIQI). Asn-12 carries an N-linked (GlcNAc...) asparagine glycan. Residues 36 to 56 (FLFSLFLVIYVLTLLGNGAII) form a helical membrane-spanning segment. Residues 57–64 (YAVRCNPL) lie on the Cytoplasmic side of the membrane. A helical transmembrane segment spans residues 65-85 (LHTPMYFLLGNFAFLEIWYVS). Residues 86–109 (STIPNMLVNILSKTKAISFSGCFL) lie on the Extracellular side of the membrane. An intrachain disulfide couples Cys-107 to Cys-199. The chain crosses the membrane as a helical span at residues 110-130 (QFYFFFSLGTTECLFLAVMAY). Residues 131–149 (DRYLAICHPLQYPAIMTVR) are Cytoplasmic-facing. A helical transmembrane segment spans residues 150–170 (FCGKLVSFCWLIGFLGYPIPI). Residues 171-207 (FYISQLPFCGPNIIDHFLCDMDPLMALSCAPAPITEC) lie on the Extracellular side of the membrane. A helical membrane pass occupies residues 208 to 227 (IFYTQSSLVLFFTSMYILRS). Over 228-247 (YILLLTAVFQVPSAAGRRKA) the chain is Cytoplasmic. The helical transmembrane segment at 248 to 268 (FSTCGSHLVVVSLFYGTVMVM) threads the bilayer. At 269-281 (YVSPTYGIPTLLQ) the chain is on the extracellular side. A helical transmembrane segment spans residues 282 to 302 (KILTLVYSVTTPLFNPLIYTL). Residues 303–324 (RNKDMKLALRNVLFGMRIRQNS) lie on the Cytoplasmic side of the membrane.

The protein belongs to the G-protein coupled receptor 1 family.

The protein localises to the cell membrane. Its function is as follows. Odorant receptor. This chain is Olfactory receptor 11H4 (OR11H4), found in Homo sapiens (Human).